The chain runs to 576 residues: Probable DNA ligase (576 aa).

E235 lines the ATP pocket. Catalysis depends on K237, which acts as the N6-AMP-lysine intermediate. 6 residues coordinate ATP: R242, R257, E285, F324, R422, and K428.

This sequence belongs to the ATP-dependent DNA ligase family. The cofactor is Mg(2+).

It catalyses the reaction ATP + (deoxyribonucleotide)n-3'-hydroxyl + 5'-phospho-(deoxyribonucleotide)m = (deoxyribonucleotide)n+m + AMP + diphosphate.. Its function is as follows. DNA ligase that seals nicks in double-stranded DNA during DNA replication, DNA recombination and DNA repair. The polypeptide is Probable DNA ligase (Koribacter versatilis (strain Ellin345)).